Reading from the N-terminus, the 184-residue chain is Phosducin-like protein 3 (184 aa).

Residues 45 to 184 (HGELKEIDEQ…VKNNKFKEDD (140 aa)) are thioredoxin fold.

Belongs to the phosducin family.

This chain is Phosducin-like protein 3 (phlp3), found in Dictyostelium discoideum (Social amoeba).